A 122-amino-acid polypeptide reads, in one-letter code: MARIAGVNIPTAKRVPIALTYVTGIGHTSAAAICEAVGIDVTRRVNELSDAEVLAIREHIDANYAVEGDLRRETQMNIKRLMDLGCYRGLRHRRNLPVRGQRTHTNARTRKGPAKAIAGKKK.

Residues 98 to 122 (VRGQRTHTNARTRKGPAKAIAGKKK) form a disordered region.

Belongs to the universal ribosomal protein uS13 family. Part of the 30S ribosomal subunit. Forms a loose heterodimer with protein S19. Forms two bridges to the 50S subunit in the 70S ribosome.

Located at the top of the head of the 30S subunit, it contacts several helices of the 16S rRNA. In the 70S ribosome it contacts the 23S rRNA (bridge B1a) and protein L5 of the 50S subunit (bridge B1b), connecting the 2 subunits; these bridges are implicated in subunit movement. Contacts the tRNAs in the A and P-sites. The chain is Small ribosomal subunit protein uS13 from Jannaschia sp. (strain CCS1).